A 356-amino-acid polypeptide reads, in one-letter code: DNA-directed RNA polymerase subunit alpha (356 aa).

Positions 1–230 are alpha N-terminal domain (alpha-NTD); it reads MNLHRISSEP…DLLKPLLKVE (230 aa). Residues 267-356 are alpha C-terminal domain (alpha-CTD); that stretch reads IDQPLLPADS…IRKSYGHILG (90 aa).

Belongs to the RNA polymerase alpha chain family. In terms of assembly, in plastids the minimal PEP RNA polymerase catalytic core is composed of four subunits: alpha, beta, beta', and beta''. When a (nuclear-encoded) sigma factor is associated with the core the holoenzyme is formed, which can initiate transcription.

The protein resides in the plastid. It localises to the chloroplast. The enzyme catalyses RNA(n) + a ribonucleoside 5'-triphosphate = RNA(n+1) + diphosphate. In terms of biological role, DNA-dependent RNA polymerase catalyzes the transcription of DNA into RNA using the four ribonucleoside triphosphates as substrates. This chain is DNA-directed RNA polymerase subunit alpha, found in Zygnema circumcarinatum (Green alga).